The following is a 409-amino-acid chain: Inactive serine protease 35 (409 aa).

An N-terminal signal peptide occupies residues 1–20 (MENTLLWLVILIPGWALSDG). The N-linked (GlcNAc...) asparagine glycan is linked to N90. The region spanning 124–404 (VYGTDSRFSI…ICLWIHGNAA (281 aa)) is the Peptidase S1 domain. C154 and C170 are joined by a disulfide. A compositionally biased stretch (basic residues) spans 188 to 207 (VLKMRNKGGRKKRRGSKRSR). The segment at 188-247 (VLKMRNKGGRKKRRGSKRSRREAESAGQSQAHLRESTTQRPGKKSRRGPRVTQGRPSFQW) is disordered.

This sequence belongs to the peptidase S1 family. In ovary, it localizes to the theca cells of pre-antral follicles, the theca and granulosa cells of pre-ovulatory and ovulatory follicles, as well as to the developing corpus luteum.

It localises to the secreted. The protein is Inactive serine protease 35 (Prss35) of Mus musculus (Mouse).